We begin with the raw amino-acid sequence, 274 residues long: Large ribosomal subunit protein uL2cz/uL2cy (274 aa).

Disordered stretches follow at residues 1-21 (MAIH…VDSQ) and 224-274 (NPVD…RRSK).

It belongs to the universal ribosomal protein uL2 family. As to quaternary structure, part of the 50S ribosomal subunit.

It is found in the plastid. Its subcellular location is the chloroplast. This chain is Large ribosomal subunit protein uL2cz/uL2cy (rpl2-A), found in Gossypium hirsutum (Upland cotton).